Consider the following 750-residue polypeptide: Protein O-mannosyl-transferase 2 (750 aa).

Positions 1 to 23 (MPPATGGGLAESELRPRRGRCGP) are disordered. A Phosphoserine modification is found at S41. A helical transmembrane segment spans residues 54–74 (AVGWWALLALVTLLSFATRFH). N-linked (GlcNAc...) asparagine glycosylation is present at N98. A run of 5 helical transmembrane segments spans residues 100 to 120 (TFFF…AGYL), 146 to 166 (GFCA…VLDL), 191 to 211 (QYIL…LSMV), 231 to 251 (LTGV…FIIL), and 283 to 303 (VLCL…VHFM). A glycan (N-linked (GlcNAc...) asparagine) is linked at N330. MIR domains lie at 334–390 (PEHL…IKKH), 403–459 (VEFV…IEVV), and 464–521 (GNRI…VEDH). N445 carries N-linked (GlcNAc...) asparagine glycosylation. N-linked (GlcNAc...) asparagine glycosylation is found at N528 and N583. Helical transmembrane passes span 596 to 616 (VVWW…SIIA), 643 to 663 (VLLG…VLYF), 665 to 685 (HYFP…DTLL), and 700 to 720 (GIHV…FYLF).

Belongs to the glycosyltransferase 39 family. In terms of assembly, interacts with POMT1. In terms of processing, N-glycosylated. In terms of tissue distribution, highly expressed in testis; detected at low levels in most tissues.

Its subcellular location is the endoplasmic reticulum membrane. The enzyme catalyses a di-trans,poly-cis-dolichyl beta-D-mannosyl phosphate + L-seryl-[protein] = 3-O-(alpha-D-mannosyl)-L-seryl-[protein] + a di-trans,poly-cis-dolichyl phosphate + H(+). The catalysed reaction is a di-trans,poly-cis-dolichyl beta-D-mannosyl phosphate + L-threonyl-[protein] = 3-O-(alpha-D-mannosyl)-L-threonyl-[protein] + a di-trans,poly-cis-dolichyl phosphate + H(+). It participates in protein modification; protein glycosylation. With respect to regulation, slightly activated by Mg(2+) and inhibited by both Ca(+) and Mn(2+). EDTA ha no effect on activity in vitro. Transfers mannosyl residues to the hydroxyl group of serine or threonine residues. Coexpression of both POMT1 and POMT2 is necessary for enzyme activity, expression of either POMT1 or POMT2 alone is insufficient. Essentially dedicated to O-mannosylation of alpha-DAG1 and few other proteins but not of cadherins and protocaherins. In Homo sapiens (Human), this protein is Protein O-mannosyl-transferase 2 (POMT2).